The following is a 368-amino-acid chain: Chaperone protein DnaJ (368 aa).

One can recognise a J domain in the interval 5-75 (DFYKILGVEK…TKRKQYDKFG (71 aa)). The segment at 139–222 (GKEISQKLTK…CRGKTIVETK (84 aa)) adopts a CR-type zinc-finger fold. Positions 152, 155, 169, 172, 196, 199, 210, and 213 each coordinate Zn(2+). CXXCXGXG motif repeat units lie at residues 152–159 (CDNCKGSG), 169–176 (CYNCQGRG), 196–203 (CSVCLGSG), and 210–217 (CKKCRGKT).

It belongs to the DnaJ family. In terms of assembly, homodimer. Requires Zn(2+) as cofactor.

The protein resides in the cytoplasm. Participates actively in the response to hyperosmotic and heat shock by preventing the aggregation of stress-denatured proteins and by disaggregating proteins, also in an autonomous, DnaK-independent fashion. Unfolded proteins bind initially to DnaJ; upon interaction with the DnaJ-bound protein, DnaK hydrolyzes its bound ATP, resulting in the formation of a stable complex. GrpE releases ADP from DnaK; ATP binding to DnaK triggers the release of the substrate protein, thus completing the reaction cycle. Several rounds of ATP-dependent interactions between DnaJ, DnaK and GrpE are required for fully efficient folding. Also involved, together with DnaK and GrpE, in the DNA replication of plasmids through activation of initiation proteins. This is Chaperone protein DnaJ from Mesomycoplasma hyopneumoniae (strain 232) (Mycoplasma hyopneumoniae).